The following is a 157-amino-acid chain: Xanthine-guanine phosphoribosyltransferase (157 aa).

Residues 42-43 (RG) and 93-101 (DDLVDTGNT) each bind 5-phospho-alpha-D-ribose 1-diphosphate. A Mg(2+)-binding site is contributed by Asp94. Residues Asp97 and Ile140 each contribute to the guanine site. Residues Asp97 and Ile140 each coordinate xanthine. Residues 97–101 (DTGNT) and 139–140 (WI) contribute to the GMP site.

The protein belongs to the purine/pyrimidine phosphoribosyltransferase family. XGPT subfamily. As to quaternary structure, homotetramer. Requires Mg(2+) as cofactor.

It is found in the cell inner membrane. The enzyme catalyses GMP + diphosphate = guanine + 5-phospho-alpha-D-ribose 1-diphosphate. It carries out the reaction XMP + diphosphate = xanthine + 5-phospho-alpha-D-ribose 1-diphosphate. The catalysed reaction is IMP + diphosphate = hypoxanthine + 5-phospho-alpha-D-ribose 1-diphosphate. The protein operates within purine metabolism; GMP biosynthesis via salvage pathway; GMP from guanine: step 1/1. It participates in purine metabolism; XMP biosynthesis via salvage pathway; XMP from xanthine: step 1/1. Purine salvage pathway enzyme that catalyzes the transfer of the ribosyl-5-phosphate group from 5-phospho-alpha-D-ribose 1-diphosphate (PRPP) to the N9 position of the 6-oxopurines guanine and xanthine to form the corresponding ribonucleotides GMP (guanosine 5'-monophosphate) and XMP (xanthosine 5'-monophosphate), with the release of PPi. To a lesser extent, also acts on hypoxanthine. This chain is Xanthine-guanine phosphoribosyltransferase, found in Actinobacillus pleuropneumoniae serotype 5b (strain L20).